A 484-amino-acid polypeptide reads, in one-letter code: Tubulin-like protein TubZ (484 aa).

GTP is bound at residue 32 to 33 (QK). Asp64 contributes to the Mg(2+) binding site. GTP-binding positions include 140–142 (GVG), Asn213, Lys237, and Asn241. Positions 408-484 (RKQDEEKVDI…LKTSNPFKKR (77 aa)) are required to bind TubR-DNA complex. Residues 428 to 484 (TFNPYNKNQGFGGASRFSGGKNSAFKRQTSEATSTQNQQEEENIISTLKTSNPFKKR) form a disordered region. A compositionally biased stretch (polar residues) spans 452-484 (FKRQTSEATSTQNQQEEENIISTLKTSNPFKKR).

It belongs to the FtsZ family. TubZ subfamily. Forms filaments; a 2-stranded filament forms with the non-hydrolyzable GTP-gamma-S which is probably a precursor to the 4-stranded filament that forms in the presence of GTP. The 4-stranded form binds GDP. In vivo polymerizes to form dynamic filaments that often extend from one cell pole to the other, moving in a unidirectional manner. Filaments polymerize at the plus end and depolymerize at the minus end, a process called treadmilling. Polymerization only occurs above a critical concentration, it does not require upstream tubR. The tubC DNA-TubR complex binds to TubZ. The cofactor is Mg(2+).

The protein resides in the cytoplasm. It carries out the reaction GTP + H2O = GDP + phosphate + H(+). GTPase is inhibited by GTP-gamma-S, which also stabilizes filaments. A tubulin-like, filament forming GTPase; the motor component of the type III plasmid partition system which ensures correct segregation of the pBtoxis plasmid. Filaments may seed from the centromere-like site (tubC) when bound by DNA-binding protein TubR; the tubC-TubR complex stabilizes the TubZ filament. Filaments grow at the plus end and depolymerize at the minus end, a process called treadmilling. TubR-tubC complexes track the depolymerizing minus end of the filament, probably pulling plasmid within the cell. Required for pBtoxis plasmid replication/partition. Binds the TubR-tubC complex; GTP is not required for binding to TubR-tubC. TubZ alone does not bind DNA. Has a high GTPase activity in the presence of Mg(2+); in the presence of GTP assembles into dynamic filaments which upon polymerization bind almost exclusively GDP. Filament formation is cooperative, requiring a critical concentration. Formation occurs very quickly and is followed by disassembly as GTP is consumed. The sequence is that of Tubulin-like protein TubZ from Bacillus thuringiensis subsp. israelensis.